Here is a 147-residue protein sequence, read N- to C-terminus: Large ribosomal subunit protein uL15 (147 aa).

Residues 1–45 (MTIKLHHLRPAPGAKSDKIRVGRGEGGKRGKTAGRGTKGTKARKN) are disordered. Residues 15–28 (KSDKIRVGRGEGGK) show a composition bias toward basic and acidic residues.

The protein belongs to the universal ribosomal protein uL15 family. In terms of assembly, part of the 50S ribosomal subunit.

Binds to the 23S rRNA. This chain is Large ribosomal subunit protein uL15, found in Rhodococcus jostii (strain RHA1).